We begin with the raw amino-acid sequence, 266 residues long: Undecaprenyl-diphosphatase (266 aa).

Helical transmembrane passes span 39-59 (PGSSLSATIQLGSVLAIVWYF), 86-106 (SIFIGTIPIVLLGGSVKLFVP), 112-132 (VLRSNLSIALVSIVMAFFMYL), 153-173 (LIGFFQALAIFPGVSRSGITI), 189-209 (FSFLLGMPAISLAAIVEFIFS), 216-236 (IGFLPLLVGLMTTFLSSLLAI), and 246-266 (NGLKIFIIYRVIFGVVILLNL).

The protein belongs to the UppP family.

The protein localises to the cell inner membrane. It catalyses the reaction di-trans,octa-cis-undecaprenyl diphosphate + H2O = di-trans,octa-cis-undecaprenyl phosphate + phosphate + H(+). Its function is as follows. Catalyzes the dephosphorylation of undecaprenyl diphosphate (UPP). Confers resistance to bacitracin. The polypeptide is Undecaprenyl-diphosphatase (Prochlorococcus marinus (strain MIT 9215)).